A 339-amino-acid chain; its full sequence is Ketol-acid reductoisomerase (NADP(+)) (339 aa).

Positions 1–182 (MRVYYDRDAD…GGGRAGVIET (182 aa)) constitute a KARI N-terminal Rossmann domain. Residues 24 to 27 (YGSQ), Arg48, Ser51, Thr53, and 83 to 86 (DELQ) contribute to the NADP(+) site. Residue His108 is part of the active site. Gly134 is a binding site for NADP(+). One can recognise a KARI C-terminal knotted domain in the interval 183–328 (TFKEECETDL…EKLRAMMPWI (146 aa)). Residues Asp191, Glu195, Glu227, and Glu231 each coordinate Mg(2+). Ser252 contributes to the substrate binding site.

Belongs to the ketol-acid reductoisomerase family. The cofactor is Mg(2+).

It carries out the reaction (2R)-2,3-dihydroxy-3-methylbutanoate + NADP(+) = (2S)-2-acetolactate + NADPH + H(+). The enzyme catalyses (2R,3R)-2,3-dihydroxy-3-methylpentanoate + NADP(+) = (S)-2-ethyl-2-hydroxy-3-oxobutanoate + NADPH + H(+). Its pathway is amino-acid biosynthesis; L-isoleucine biosynthesis; L-isoleucine from 2-oxobutanoate: step 2/4. The protein operates within amino-acid biosynthesis; L-valine biosynthesis; L-valine from pyruvate: step 2/4. Functionally, involved in the biosynthesis of branched-chain amino acids (BCAA). Catalyzes an alkyl-migration followed by a ketol-acid reduction of (S)-2-acetolactate (S2AL) to yield (R)-2,3-dihydroxy-isovalerate. In the isomerase reaction, S2AL is rearranged via a Mg-dependent methyl migration to produce 3-hydroxy-3-methyl-2-ketobutyrate (HMKB). In the reductase reaction, this 2-ketoacid undergoes a metal-dependent reduction by NADPH to yield (R)-2,3-dihydroxy-isovalerate. The chain is Ketol-acid reductoisomerase (NADP(+)) from Xanthobacter autotrophicus (strain ATCC BAA-1158 / Py2).